The following is a 143-amino-acid chain: Large-conductance mechanosensitive channel (143 aa).

2 helical membrane-spanning segments follow: residues 10–30 and 89–109; these read FAVK…GAFS and GSFI…FLMV.

This sequence belongs to the MscL family. Homopentamer.

The protein resides in the cell inner membrane. Its function is as follows. Channel that opens in response to stretch forces in the membrane lipid bilayer. May participate in the regulation of osmotic pressure changes within the cell. The polypeptide is Large-conductance mechanosensitive channel (Burkholderia cenocepacia (strain HI2424)).